Here is a 330-residue protein sequence, read N- to C-terminus: UPF0324 membrane protein PG_2004 (330 aa).

A run of 9 helical transmembrane segments spans residues I13–V31, P36–G58, V71–G93, M97–I114, S126–L148, A158–L180, V248–F270, L285–R307, and G312–L329.

Belongs to the UPF0324 family.

The protein resides in the cell membrane. This chain is UPF0324 membrane protein PG_2004, found in Porphyromonas gingivalis (strain ATCC BAA-308 / W83).